A 126-amino-acid chain; its full sequence is Small ribosomal subunit protein bS6 (126 aa).

A disordered region spans residues 101–126 (VMMKAKEERSAKREDAAPRAEEAAAE). Residues 104–126 (KAKEERSAKREDAAPRAEEAAAE) are compositionally biased toward basic and acidic residues.

It belongs to the bacterial ribosomal protein bS6 family.

Its function is as follows. Binds together with bS18 to 16S ribosomal RNA. This Aliivibrio fischeri (strain ATCC 700601 / ES114) (Vibrio fischeri) protein is Small ribosomal subunit protein bS6.